We begin with the raw amino-acid sequence, 257 residues long: Diphthine synthase (257 aa).

S-adenosyl-L-methionine is bound by residues L9, D83, M86, 111–112 (SI), and I163.

The protein belongs to the diphthine synthase family. In terms of assembly, homodimer.

The enzyme catalyses 2-[(3S)-amino-3-carboxypropyl]-L-histidyl-[translation elongation factor 2] + 3 S-adenosyl-L-methionine = diphthine-[translation elongation factor 2] + 3 S-adenosyl-L-homocysteine + 3 H(+). The protein operates within protein modification; peptidyl-diphthamide biosynthesis. Functionally, S-adenosyl-L-methionine-dependent methyltransferase that catalyzes the trimethylation of the amino group of the modified target histidine residue in translation elongation factor 2 (EF-2), to form an intermediate called diphthine. The three successive methylation reactions represent the second step of diphthamide biosynthesis. The polypeptide is Diphthine synthase (Thermoplasma acidophilum (strain ATCC 25905 / DSM 1728 / JCM 9062 / NBRC 15155 / AMRC-C165)).